Consider the following 632-residue polypeptide: Probable potassium transport system protein Kup (632 aa).

12 helical membrane passes run 17–37 (LFYL…TSPL), 60–80 (LISL…VLFL), 106–126 (TAIL…DAMI), 146–166 (LSEY…VVQS), 175–195 (FFGP…ISHI), 210–230 (AVSF…AVFL), 254–274 (WFLL…ALVL), 292–312 (ALLP…QAVI), 344–364 (IFVP…VLSF), 370–390 (LATA…IMAF), 401–421 (LPVA…FLGA), and 426–446 (IHDG…IMWT).

Belongs to the HAK/KUP transporter (TC 2.A.72) family.

The protein localises to the cell inner membrane. It catalyses the reaction K(+)(in) + H(+)(in) = K(+)(out) + H(+)(out). Its function is as follows. Transport of potassium into the cell. Likely operates as a K(+):H(+) symporter. In Rhizobium rhizogenes (Agrobacterium rhizogenes), this protein is Probable potassium transport system protein Kup.